We begin with the raw amino-acid sequence, 72 residues long: Potassium channel toxin kappa-KTx 5.1 (72 aa).

The signal sequence occupies residues 1 to 23 (MKLLPLLFVILIVCAILPDEASC). A propeptide spanning residues 24-43 (DQSELERKEENFKDESREIV) is cleaved from the precursor. 2 disulfides stabilise this stretch: Cys47/Cys64 and Cys51/Cys60. The residue at position 70 (His70) is a Histidine amide.

The protein belongs to the short scorpion toxin superfamily. Potassium channel inhibitor kappa-KTx family. Kappa-KTx 5 subfamily. As to expression, expressed by the venom gland.

It is found in the secreted. Weak blocker of potassium channels Kv1.1/KCNA1 (IC(50)=578.5 nM-9.9 uM) and Kv1.6/KCNA6 (~60% block at 30 uM of toxin). Acts by binding to the pore and occluding it. Has a voltage-dependent mode of action, which can be explained by a high content of basic residues causing repulsions at higher membrane voltages. Shows a weak interaction with muscle-type nicotinic acetylcholine receptors (nAChR), since it inhibits alpha-bungarotoxin binding to muscle-type nAChR from T.californica (IC(50)=1.4 uM). This suggests it probably weakly inhibits muscle nAChR. The mode of binding to potassium channels of this toxin differs from its homologs (including HefuTx1), since it lacks the key aromatic residue of the functional dyad. In contrast, its functionally important site is composed of a number of basic residues. In Heterometrus laoticus (Thai giant scorpion), this protein is Potassium channel toxin kappa-KTx 5.1.